The sequence spans 1342 residues: DNA-directed RNA polymerase subunit beta (1342 aa).

It belongs to the RNA polymerase beta chain family. The RNAP catalytic core consists of 2 alpha, 1 beta, 1 beta' and 1 omega subunit. When a sigma factor is associated with the core the holoenzyme is formed, which can initiate transcription.

It carries out the reaction RNA(n) + a ribonucleoside 5'-triphosphate = RNA(n+1) + diphosphate. DNA-dependent RNA polymerase catalyzes the transcription of DNA into RNA using the four ribonucleoside triphosphates as substrates. The sequence is that of DNA-directed RNA polymerase subunit beta from Buchnera aphidicola subsp. Acyrthosiphon pisum (strain 5A).